The following is a 374-amino-acid chain: Phospho-2-dehydro-3-deoxyheptonate aldolase AMT16 (374 aa).

The protein belongs to the class-I DAHP synthase family.

It carries out the reaction D-erythrose 4-phosphate + phosphoenolpyruvate + H2O = 7-phospho-2-dehydro-3-deoxy-D-arabino-heptonate + phosphate. It functions in the pathway mycotoxin biosynthesis. Its function is as follows. Nonribosomal peptide synthetase; part of the gene clusters that mediate the biosynthesis of AM-toxins, host-selective toxins (HSTs) causing Alternaria blotch on apple, a worldwide distributed disease. AM-toxins are cyclic depsipeptides containing the 3 residues 2-hydroxy-isovaleric acid (2-HIV), dehydroalanine, L-alanine which are common for all 3 AM-toxins I to III. The fourth precursor is L-alpha-amino-methoxyphenyl-valeric acid (L-Amv) for AM-toxin I, L-alpha-amino-phenyl-valeric acid (L-Apv) for AM-toxin II, and L-alpha-amino-hydroxyphenyl-valeric acid (L-Ahv) for AM-toxin III. AM-toxins have two target sites for affecting susceptible apple cells; they cause invagination of the plasma membrane and electrolyte loss and chloroplast disorganization. The non-ribosomal peptide synthetase AMT1 contains 4 catalytic modules and is responsible for activation of each residue in AM-toxin. The aldo-keto reductase AMT2 catalyzes the conversion of 2-keto-isovaleric acid (2-KIV) to 2-hydroxy-isovaleric acid (2-HIV), one of the precursor residues incorporated by AMT1 during AM-toxin biosynthesis, by reduction of its ketone to an alcohol. The cytochrome P450 monooxygenase AMT3 and the thioesterase AMT4 are also important for AM-toxin production, but their exact function within the AM-toxin biosynthesis are not known yet. Up to 21 proteins (including AMT1 to AMT4) are predicted to be involved in AM-toxin biosynthesis since their expression ishighly up-regulated in AM-toxin-producing cultures. This is Phospho-2-dehydro-3-deoxyheptonate aldolase AMT16 from Alternaria alternata (Alternaria rot fungus).